The following is a 280-amino-acid chain: Pyrethroid hydrolase (280 aa).

Active-site charge relay system residues include D202 and H230. The tract at residues 254 to 280 is disordered; it reads YRQTATKAGPDRPAGADGGRADRADLP.

Belongs to the AB hydrolase superfamily. In terms of assembly, monomer.

It catalyses the reaction (-)-trans-permethrin + H2O = (3-phenoxyphenyl)methanol + (1S,3R)-3-(2,2-dichlorovinyl)-2,2-dimethylcyclopropanecarboxylate + H(+). Functionally, catalyzes the hydrolysis of pyrethroids pesticides. Catalyzes the hydrolysis of cypermethrin to equimolar amounts of cyano-3-phenoxybenzyl alcohol and 2,2-dimethyl-3-(2,2-dichlorovinyl)-cyclopropanecarboxylic acid. Hydrolyzes cis-permethrin at approximately equal rate to trans-permethrin. The chain is Pyrethroid hydrolase (pytH) from Sphingobium wenxiniae (strain DSM 21828 / CGMCC 1.7748 / JZ-1).